The sequence spans 156 residues: Deoxyuridine 5'-triphosphate nucleotidohydrolase (156 aa).

This sequence belongs to the dCTP deaminase family. Archaeal dUTPase subfamily. As to quaternary structure, homotrimer.

The enzyme catalyses dUTP + H2O = dUMP + diphosphate + H(+). Its pathway is pyrimidine metabolism; dUMP biosynthesis; dUMP from dCTP (dUTP route): step 2/2. Its function is as follows. This enzyme is involved in nucleotide metabolism: it produces dUMP, the immediate precursor of thymidine nucleotides and it decreases the intracellular concentration of dUTP so that uracil cannot be incorporated into DNA. The polypeptide is Deoxyuridine 5'-triphosphate nucleotidohydrolase (Methanocaldococcus jannaschii (strain ATCC 43067 / DSM 2661 / JAL-1 / JCM 10045 / NBRC 100440) (Methanococcus jannaschii)).